The following is a 247-amino-acid chain: ATP synthase subunit a, chloroplastic (247 aa).

The next 5 membrane-spanning stretches (helical) occupy residues 38-58 (QVLI…LIAV), 95-115 (VPFI…GALL), 134-154 (INTT…AGLS), 199-219 (LVVV…VMFL), and 220-240 (GLFT…AYIG).

The protein belongs to the ATPase A chain family. As to quaternary structure, F-type ATPases have 2 components, CF(1) - the catalytic core - and CF(0) - the membrane proton channel. CF(1) has five subunits: alpha(3), beta(3), gamma(1), delta(1), epsilon(1). CF(0) has four main subunits: a, b, b' and c.

It localises to the plastid. Its subcellular location is the chloroplast thylakoid membrane. Functionally, key component of the proton channel; it plays a direct role in the translocation of protons across the membrane. This is ATP synthase subunit a, chloroplastic from Brachypodium distachyon (Purple false brome).